A 462-amino-acid polypeptide reads, in one-letter code: Protein Tube (462 aa).

A Death domain is found at 27–152 (YSRNTELRRV…SAADFVALDF (126 aa)). Residues 218 to 265 (RDKSVPQPSGNTPPIAPPRRQQRSTTNSNFATLTGTGTTSTTIPNVPN) form a disordered region. The span at 249-259 (TLTGTGTTSTT) shows a compositional bias: low complexity. 2 consecutive repeat copies span residues 262-269 (NVPNLTIL) and 286-293 (NIPDLSIL). A 5 X approximate repeats region spans residues 262–460 (NVPNLTILNP…ACNIPDLSEL (199 aa)). Over residues 301–317 (RATVSDNPSNRTSSTDP) the composition is skewed to polar residues. The segment at 301–462 (RATVSDNPSN…NIPDLSELQQ (162 aa)) is disordered. The stretch at 319–326 (NIPRITLL) is repeat 3. Low complexity predominate over residues 342 to 354 (AKASTATTSTASS). Over residues 355 to 367 (NNLPMISALNISK) the composition is skewed to polar residues. Repeat 4 spans residues 356 to 363 (NLPMISAL). Residues 368–377 (GSRETLRPES) show a composition bias toward basic and acidic residues. The span at 387–403 (DDDDDNDGEEDGEEEYP) shows a compositional bias: acidic residues. Over residues 409–424 (NLSNSEQQSSNNDSSL) the composition is skewed to low complexity. A compositionally biased stretch (polar residues) spans 425 to 438 (TTVTGTSGDNSFEL). Residues 439–449 (TNDSSSTSNDD) are compositionally biased toward low complexity. Copy 5 of the repeat occupies 453 to 460 (NIPDLSEL).

Interacts (via Death domain) with pll (via Death domain). Phosphorylated by pll.

Its subcellular location is the cytoplasm. It is found in the cell membrane. Plays an essential role in the Tl receptor signaling pathway that establishes embryonic dorsoventral polarity; the signal directs import of dl into ventral and ventrolateral nuclei, thereby establishing dorsoventral polarity. Tub recruits pll to the plasma membrane and protein-protein interaction activates pll. Also has a role in pupal pattern formation. The polypeptide is Protein Tube (tub) (Drosophila melanogaster (Fruit fly)).